The following is a 315-amino-acid chain: Glucokinase-like protein CC_3167 (315 aa).

It belongs to the bacterial glucokinase family.

This is Glucokinase-like protein CC_3167 from Caulobacter vibrioides (strain ATCC 19089 / CIP 103742 / CB 15) (Caulobacter crescentus).